Consider the following 138-residue polypeptide: Large ribosomal subunit protein uL16c (138 aa).

The protein belongs to the universal ribosomal protein uL16 family. As to quaternary structure, part of the 50S ribosomal subunit.

It localises to the plastid. Its subcellular location is the chloroplast. The chain is Large ribosomal subunit protein uL16c from Physcomitrium patens (Spreading-leaved earth moss).